We begin with the raw amino-acid sequence, 385 residues long: Non-structural maintenance of chromosomes element 4 homolog A (385 aa).

Residues Met1–Asp69 are disordered. Basic and acidic residues-rich tracts occupy residues Pro10–Arg21 and Ser42–Leu55. A compositionally biased stretch (acidic residues) spans Glu56–Met68. Position 345 is a phosphothreonine (Thr345). Ser377 carries the post-translational modification Phosphoserine.

The protein belongs to the NSE4 family. Component of the SMC5-SMC6 complex which consists at least of SMC5, SMC6, NSMCE2, NSMCE1, NSMCE4A or EID3 and NSMCE3. NSMCE1, NSMCE4A or EID3 and NSMCE3 probably form a subcomplex that bridges the head domains of the SMC5:SMC6 heterodimer. Interacts with NSMCE3.

It localises to the nucleus. It is found in the chromosome. The protein resides in the telomere. Component of the SMC5-SMC6 complex, a complex involved in DNA double-strand breaks by homologous recombination. The complex may promote sister chromatid homologous recombination by recruiting the SMC1-SMC3 cohesin complex to double-strand breaks. The complex is required for telomere maintenance via recombination in ALT (alternative lengthening of telomeres) cell lines and mediates sumoylation of shelterin complex (telosome) components which is proposed to lead to shelterin complex disassembly in ALT-associated PML bodies (APBs). Is involved in positive regulation of response to DNA damage stimulus. This is Non-structural maintenance of chromosomes element 4 homolog A (NSMCE4A) from Homo sapiens (Human).